The sequence spans 62 residues: DNA-directed RNA polymerase subunit Rpo10 (62 aa).

Zn(2+)-binding residues include C6, C9, C43, and C44.

Belongs to the archaeal Rpo10/eukaryotic RPB10 RNA polymerase subunit family. As to quaternary structure, part of the RNA polymerase complex. Requires Zn(2+) as cofactor.

The protein localises to the cytoplasm. It carries out the reaction RNA(n) + a ribonucleoside 5'-triphosphate = RNA(n+1) + diphosphate. Its function is as follows. DNA-dependent RNA polymerase (RNAP) catalyzes the transcription of DNA into RNA using the four ribonucleoside triphosphates as substrates. The chain is DNA-directed RNA polymerase subunit Rpo10 from Methanococcoides burtonii (strain DSM 6242 / NBRC 107633 / OCM 468 / ACE-M).